A 436-amino-acid polypeptide reads, in one-letter code: Adenine nucleotide transporter BT1, chloroplastic/amyloplastic/mitochondrial (436 aa).

The tract at residues 83–135 (ASLAPPFPGSRPPGRRGRGSEEEEAEGRRHEEAAAAGRSEPEEGQGQDRQPAP) is disordered. Solcar repeat units lie at residues 132–216 (QPAP…AKKF), 227–311 (IPIP…LKRL), and 324–412 (VGPV…CKKI). 6 consecutive transmembrane segments (helical) span residues 137-158 (RLVSGAIAGAVSRTFVAPLETI), 193-213 (AVNVLRVAPSKAIEHFTYDTA), 229-247 (IPTPLVAGALAGFASTLCT), 290-310 (SLIGVVPYAACNFYAYETLKR), 327-347 (VATLLIGSAAGAIASSATFPL), and 384-405 (LYRGLGPSCIKLMPAAGIAFMC). Positions 417 to 428 (EDEEEEDEAGGG) are enriched in acidic residues. Residues 417-436 (EDEEEEDEAGGGEDDKKKVE) form a disordered region.

It belongs to the mitochondrial carrier (TC 2.A.29) family. In terms of tissue distribution, highly expressed in silks and endosperm of developing kernels. Expressed at intermediate levels in tassels and lower levels in stems and leaves.

The protein localises to the plastid. Its subcellular location is the chloroplast inner membrane. The protein resides in the amyloplast inner membrane. It is found in the mitochondrion inner membrane. Inhibited by mersalyl. In terms of biological role, probable adenylate translocator that mediates transport of ADP-glucose into endosperm storage plastids during starch synthesis. Transports cytosolic ADP-glucose to amyloplast stroma by counter-exchange with ADP. The protein is Adenine nucleotide transporter BT1, chloroplastic/amyloplastic/mitochondrial (BT1) of Zea mays (Maize).